The primary structure comprises 552 residues: Arginine--tRNA ligase (552 aa).

Residues 130-140 (ANPTGPIHLGG) carry the 'HIGH' region motif.

Belongs to the class-I aminoacyl-tRNA synthetase family. In terms of assembly, monomer.

The protein localises to the cytoplasm. The catalysed reaction is tRNA(Arg) + L-arginine + ATP = L-arginyl-tRNA(Arg) + AMP + diphosphate. The protein is Arginine--tRNA ligase of Nocardia farcinica (strain IFM 10152).